The primary structure comprises 331 residues: Neuropeptides B/W receptor type 1 (331 aa).

The Extracellular portion of the chain corresponds to 1-43; that stretch reads MHNASYWGPERANTSCPAPAPTLGCPNASGPAPPLPPPLAVAV. N-linked (GlcNAc...) asparagine glycosylation is found at asparagine 3, asparagine 13, and asparagine 27. A helical transmembrane segment spans residues 44-66; sequence PVVYAVICAVGLAGNSAVLFVLL. Residues 67-75 are Cytoplasmic-facing; the sequence is RAPRRKTVT. The chain crosses the membrane as a helical span at residues 76–100; sequence NLFILNLAVADELFTLVPPVNIADF. Residues 101-115 lie on the Extracellular side of the membrane; the sequence is LLRRWPFGELLCKLV. The cysteines at positions 112 and 191 are disulfide-linked. Residues 116–135 form a helical membrane-spanning segment; that stretch reads VAVDQYNTFSSLYFLTVMSA. The Cytoplasmic portion of the chain corresponds to 136-160; sequence DRYLVVLATAESRRVAGRTYGAARA. Residues 161 to 180 form a helical membrane-spanning segment; that stretch reads VSLAVWGVATLVVLPFAVFA. Over 181 to 205 the chain is Extracellular; the sequence is RLDEEQGRRQCVLVFPQPEALWWRA. The helical transmembrane segment at 206-227 threads the bilayer; the sequence is SRLYTLVLGFAIPVSTICVLYT. The Cytoplasmic segment spans residues 228-251; it reads SLLCRLRAIRLDSHAKALDRAKKR. Residues 252–276 form a helical membrane-spanning segment; sequence VTVLVVAILAVCLLVWTPYHLSTVV. The Extracellular segment spans residues 277–286; it reads ALTTDLPQTP. The chain crosses the membrane as a helical span at residues 287–301; the sequence is LVIAVSYFITSLSYA. Topologically, residues 302 to 331 are cytoplasmic; the sequence is NSCLNPFLYAFLDDSFRRSLRQLLACRTTS.

It belongs to the G-protein coupled receptor 1 family.

The protein localises to the cell membrane. In terms of biological role, interacts specifically with a number of opioid ligands. Receptor for neuropeptides B and W, which may be involved in neuroendocrine system regulation, food intake and the organization of other signals. The chain is Neuropeptides B/W receptor type 1 (NPBWR1) from Bos taurus (Bovine).